The chain runs to 563 residues: Rab escort protein 1 (563 aa).

Residues 538–563 (ELFKEETSPAENTTEEENDGGVEIED) form a disordered region. Residues 550 to 563 (TTEEENDGGVEIED) show a composition bias toward acidic residues.

It belongs to the Rab GDI family. Heterotrimer composed of the alpha subunit RGTA, the beta subunit RGTB and REP; within this trimer, RGTA and RGTB form the catalytic component, while REP mediates peptide substrate binding. In terms of tissue distribution, expressed in roots, leaves and flowers.

It is found in the cytoplasm. In terms of biological role, substrate-binding subunit of the Rab geranylgeranyltransferase (GGTase) complex. Binds unprenylated Rab proteins and presents the substrate peptide to the catalytic component composed of the alpha subunit RGTA and the beta subunit RGTB. Preferentially binds the GDP-bound form of Rab and stimulates geranylgeranylation of various Rab GTPases in vitro. The sequence is that of Rab escort protein 1 from Arabidopsis thaliana (Mouse-ear cress).